Consider the following 333-residue polypeptide: UPF0324 membrane protein WS2204 (333 aa).

Transmembrane regions (helical) follow at residues 4–26 (SIRP…FGLA), 31–53 (FLSL…APWY), 59–81 (IGII…LFGF), 88–110 (LLGV…FTLG), 125–147 (SMLI…ESLS), 154–176 (TAIA…PLVY), 218–240 (VIVK…FTIL), 253–275 (PWFA…PSWL), and 310–332 (ALAL…VKLL).

This sequence belongs to the UPF0324 family.

It is found in the cell membrane. This Wolinella succinogenes (strain ATCC 29543 / DSM 1740 / CCUG 13145 / JCM 31913 / LMG 7466 / NCTC 11488 / FDC 602W) (Vibrio succinogenes) protein is UPF0324 membrane protein WS2204.